A 333-amino-acid polypeptide reads, in one-letter code: G-protein coupled receptor 146 (333 aa).

At 1 to 21 (MWSCEDLNYTNSGEEQYLCNE) the chain is on the extracellular side. N-linked (GlcNAc...) asparagine glycosylation is present at Asn-8. A helical transmembrane segment spans residues 22-42 (FHLFLFIFSVLYLIICFPVGL). Residues 43-65 (CYNVQLVLVNLYNKATMTMPDVY) are Cytoplasmic-facing. A helical membrane pass occupies residues 66 to 86 (FVNMAIAGLIINAVAPVYLFG). The Extracellular segment spans residues 87-102 (PAYTKWSLWSFGNEVY). The chain crosses the membrane as a helical span at residues 103-123 (ITLLILFNVSSLVIMYSTTLL). The Cytoplasmic portion of the chain corresponds to 124–146 (SLDYYIECALPRTYMSSVYNTKH). Residues 147–167 (VCGFIWGGAVLTSFSSLLFYI) form a helical membrane-spanning segment. At 168 to 189 (CNHVSTKIIECSKMQNREAADA) the chain is on the extracellular side. The chain crosses the membrane as a helical span at residues 190-210 (IMVLIGYVVPIIAVIYALVLI). Residues 211 to 234 (LQIRKEATPLDQESGRLDPSVHRL) lie on the Cytoplasmic side of the membrane. Residues 235–255 (LIATVCTQFILWTPYYVTLLV) traverse the membrane as a helical segment. Topologically, residues 256 to 275 (NTFMDARVKSSNTFYIRIFQ) are extracellular. A helical membrane pass occupies residues 276 to 296 (FTEGLSNFLAFSSSFVLPLIH). Topologically, residues 297-333 (RHINKNFSGKLQRLLKRLHCGSQGCTHEHTVVQQVMT) are cytoplasmic.

Belongs to the G-protein coupled receptor 1 family.

It localises to the cell membrane. In terms of biological role, G-protein coupled receptor required for the regulation of plasma cholesterol levels. This chain is G-protein coupled receptor 146 (gpr146), found in Xenopus laevis (African clawed frog).